A 924-amino-acid polypeptide reads, in one-letter code: Periplasmic nitrate reductase (924 aa).

A signal peptide (tat-type signal) is located at residues 1 to 30 (MNRRDFIKNTAIASAASVAGLSVPSSMLGA). Residues 35 to 91 (WKWDKAVCRFCGTGCGIMIARKDGKIVATKGDPAAPVNRGLNCIKGYFNAKIMYGED) enclose the 4Fe-4S Mo/W bis-MGD-type domain. The [4Fe-4S] cluster site is built by cysteine 42, cysteine 45, cysteine 49, and cysteine 77. Mo-bis(molybdopterin guanine dinucleotide)-binding positions include lysine 79, glutamine 147, asparagine 172, cysteine 176, 209-216 (WGANMAEM), methionine 417, glutamine 421, asparagine 527, 552-553 (SD), lysine 575, aspartate 602, and 814-823 (TGRVLEHWHS). Tryptophan 890 contacts substrate. The Mo-bis(molybdopterin guanine dinucleotide) site is built by asparagine 898 and lysine 915.

It belongs to the prokaryotic molybdopterin-containing oxidoreductase family. NasA/NapA/NarB subfamily. In terms of assembly, component of the periplasmic nitrate reductase NapAB complex composed of NapA and NapB. The cofactor is [4Fe-4S] cluster. Mo-bis(molybdopterin guanine dinucleotide) serves as cofactor. Predicted to be exported by the Tat system. The position of the signal peptide cleavage has not been experimentally proven.

Its subcellular location is the periplasm. The enzyme catalyses 2 Fe(II)-[cytochrome] + nitrate + 2 H(+) = 2 Fe(III)-[cytochrome] + nitrite + H2O. In terms of biological role, catalytic subunit of the periplasmic nitrate reductase complex NapAB. Receives electrons from NapB and catalyzes the reduction of nitrate to nitrite. The protein is Periplasmic nitrate reductase of Campylobacter jejuni subsp. jejuni serotype O:6 (strain 81116 / NCTC 11828).